The following is a 138-amino-acid chain: RutC family protein UK114 (138 aa).

Belongs to the RutC family.

Functionally, molecular chaperone. Seems to fulfill an ATP-independent, HSP70-like function in protein folding. May protect essential factors of cell proliferation during heat shock. No role in calpain activation. The chain is RutC family protein UK114 from Drosophila melanogaster (Fruit fly).